We begin with the raw amino-acid sequence, 220 residues long: DNA-directed RNA polymerase subunit alpha (220 aa).

This sequence belongs to the RNA polymerase alpha chain family. In terms of assembly, in plastids the minimal PEP RNA polymerase catalytic core is composed of four subunits: alpha, beta, beta', and beta''. When a (nuclear-encoded) sigma factor is associated with the core the holoenzyme is formed, which can initiate transcription.

It is found in the plastid. The enzyme catalyses RNA(n) + a ribonucleoside 5'-triphosphate = RNA(n+1) + diphosphate. Functionally, DNA-dependent RNA polymerase catalyzes the transcription of DNA into RNA using the four ribonucleoside triphosphates as substrates. The polypeptide is DNA-directed RNA polymerase subunit alpha (rpoA) (Euglena longa (Euglenophycean alga)).